The following is a 345-amino-acid chain: Anthranilate phosphoribosyltransferase (345 aa).

Residues Gly-84, Gly-87–Asp-88, Thr-92, Asn-94–Thr-97, Lys-112–Ser-120, and Ser-124 contribute to the 5-phospho-alpha-D-ribose 1-diphosphate site. Gly-84 serves as a coordination point for anthranilate. Position 96 (Ser-96) interacts with Mg(2+). An anthranilate-binding site is contributed by Asn-115. Arg-170 contributes to the anthranilate binding site. Positions 229 and 230 each coordinate Mg(2+).

Belongs to the anthranilate phosphoribosyltransferase family. As to quaternary structure, homodimer. Mg(2+) serves as cofactor.

It carries out the reaction N-(5-phospho-beta-D-ribosyl)anthranilate + diphosphate = 5-phospho-alpha-D-ribose 1-diphosphate + anthranilate. It functions in the pathway amino-acid biosynthesis; L-tryptophan biosynthesis; L-tryptophan from chorismate: step 2/5. Catalyzes the transfer of the phosphoribosyl group of 5-phosphorylribose-1-pyrophosphate (PRPP) to anthranilate to yield N-(5'-phosphoribosyl)-anthranilate (PRA). The protein is Anthranilate phosphoribosyltransferase of Xanthomonas oryzae pv. oryzae (strain MAFF 311018).